The sequence spans 141 residues: Large ribosomal subunit protein uL11 (141 aa).

The protein belongs to the universal ribosomal protein uL11 family. As to quaternary structure, part of the ribosomal stalk of the 50S ribosomal subunit. Interacts with L10 and the large rRNA to form the base of the stalk. L10 forms an elongated spine to which L12 dimers bind in a sequential fashion forming a multimeric L10(L12)X complex. In terms of processing, one or more lysine residues are methylated.

In terms of biological role, forms part of the ribosomal stalk which helps the ribosome interact with GTP-bound translation factors. This is Large ribosomal subunit protein uL11 from Lactococcus lactis subsp. lactis (strain IL1403) (Streptococcus lactis).